Consider the following 301-residue polypeptide: Ribosomal protein L11 methyltransferase (301 aa).

S-adenosyl-L-methionine is bound by residues Thr130, Gly151, Asp172, and Asn239.

The protein belongs to the methyltransferase superfamily. PrmA family.

It is found in the cytoplasm. It carries out the reaction L-lysyl-[protein] + 3 S-adenosyl-L-methionine = N(6),N(6),N(6)-trimethyl-L-lysyl-[protein] + 3 S-adenosyl-L-homocysteine + 3 H(+). Its function is as follows. Methylates ribosomal protein L11. This chain is Ribosomal protein L11 methyltransferase, found in Campylobacter hominis (strain ATCC BAA-381 / DSM 21671 / CCUG 45161 / LMG 19568 / NCTC 13146 / CH001A).